Consider the following 756-residue polypeptide: Catalase-peroxidase (756 aa).

Residues 91-244 (WHSAGTYRTG…LAAVQMGLIY (154 aa)) constitute a cross-link (tryptophyl-tyrosyl-methioninium (Trp-Tyr) (with M-270)). H92 serves as the catalytic Proton acceptor. Residues 198–230 (AQKKMQQPGDGTLVAEPENHANEESRTASGERN) form a disordered region. Residues 214-223 (PENHANEESR) are compositionally biased toward basic and acidic residues. A cross-link (tryptophyl-tyrosyl-methioninium (Tyr-Met) (with W-91)) is located at residues 244 to 270 (YVNPEGPEGVPDPVASARDIRETFGRM). Residue H285 coordinates heme b. The interval 371-390 (KNGAGAGKIPDAHDPSKRHA) is disordered.

The protein belongs to the peroxidase family. Peroxidase/catalase subfamily. As to quaternary structure, homodimer or homotetramer. Heme b serves as cofactor. In terms of processing, formation of the three residue Trp-Tyr-Met cross-link is important for the catalase, but not the peroxidase activity of the enzyme.

It catalyses the reaction H2O2 + AH2 = A + 2 H2O. The enzyme catalyses 2 H2O2 = O2 + 2 H2O. Functionally, bifunctional enzyme with both catalase and broad-spectrum peroxidase activity. The polypeptide is Catalase-peroxidase (Pseudomonas syringae pv. tomato (strain ATCC BAA-871 / DC3000)).